A 1400-amino-acid chain; its full sequence is DNA-directed RNA polymerase subunit beta' (1400 aa).

Zn(2+)-binding residues include Cys-71, Cys-73, Cys-86, and Cys-89. Mg(2+)-binding residues include Asp-462, Asp-464, and Asp-466. Residues Cys-820, Cys-893, Cys-900, and Cys-903 each coordinate Zn(2+).

It belongs to the RNA polymerase beta' chain family. As to quaternary structure, the RNAP catalytic core consists of 2 alpha, 1 beta, 1 beta' and 1 omega subunit. When a sigma factor is associated with the core the holoenzyme is formed, which can initiate transcription. The cofactor is Mg(2+). Zn(2+) serves as cofactor.

The catalysed reaction is RNA(n) + a ribonucleoside 5'-triphosphate = RNA(n+1) + diphosphate. Functionally, DNA-dependent RNA polymerase catalyzes the transcription of DNA into RNA using the four ribonucleoside triphosphates as substrates. The polypeptide is DNA-directed RNA polymerase subunit beta' (Methylobacterium sp. (strain 4-46)).